Consider the following 395-residue polypeptide: Ribosomal RNA large subunit methyltransferase G (395 aa).

Belongs to the methyltransferase superfamily. RlmG family.

It is found in the cytoplasm. It catalyses the reaction guanosine(1835) in 23S rRNA + S-adenosyl-L-methionine = N(2)-methylguanosine(1835) in 23S rRNA + S-adenosyl-L-homocysteine + H(+). Specifically methylates the guanine in position 1835 (m2G1835) of 23S rRNA. The protein is Ribosomal RNA large subunit methyltransferase G of Yersinia pseudotuberculosis serotype O:1b (strain IP 31758).